The following is an 896-amino-acid chain: Myelin regulatory factor-like protein (896 aa).

Positions 111-403 form a DNA-binding region, NDT80; sequence GLPHRTFHNC…SNPGQFENDI (293 aa). The Peptidase S74 domain occupies 449–557; the sequence is SDSRAKQNVQ…KLTNNLEERI (109 aa). Positions 541–573 form a coiled coil; that stretch reads GAVKQLCKLTNNLEERIEELEIWNRKLARLKRL. A helical membrane pass occupies residues 622–638; sequence VFQSLVITLIAVMAFCL. Over residues 648-658 the composition is skewed to polar residues; it reads APSSNLTSSQE. A disordered region spans residues 648–672; that stretch reads APSSNLTSSQEPALPSTASPSAPNT. Over residues 659–672 the composition is skewed to low complexity; sequence PALPSTASPSAPNT.

Belongs to the MRF family.

It is found in the membrane. This Bos taurus (Bovine) protein is Myelin regulatory factor-like protein (MYRFL).